Consider the following 541-residue polypeptide: Protein panoramix (541 aa).

Residues 1–169 (MEAPMKLEVK…TLVPDEQQSF (169 aa)) form an interaction with Piwi region. Disordered stretches follow at residues 52-75 (SDPE…LQPS) and 198-281 (TAEN…TELD). A coiled-coil region spans residues 194–216 (MLEMTAENRKVKHKKKKHKKERS). Positions 203–220 (KVKHKKKKHKKERSHRSN) are enriched in basic residues. Basic and acidic residues-rich tracts occupy residues 241–251 (DDKNQFDCDYR) and 269–279 (SSKERKLRDTE). Residues 315–343 (LSKADKRSLAVARAELVLEQIQQKANKEE) form a nxf2-interacting region (NIR) region. A coiled-coil region spans residues 323 to 343 (LAVARAELVLEQIQQKANKEE). A necessary for interaction with nxf2 and protein stability region spans residues 387 to 446 (TPGTRIDLSKWGLETVPEATKRLLRLLGIDVARLKELQSTVKPSQRILKLKKEQLEQGLA).

As to quaternary structure, in the ovaries, part of a complex composed of at least Panx, nxf2, piwi and Nxt1. The complex is knowns as Panx-induced cotranscriptional silencing (PICTS) complex, Panx-nxf2-dependent TAP/p15 silencing (Pandas complex), SFiNX (silencing factor interacting nuclear export variant) or piwi-Panx-nxf2-p15 (PPNP) complex. Interacts (via NIR region) with nxf2 (via TAP-C domain); the interaction is direct. In terms of tissue distribution, expressed in female gonads (at protein level).

Its subcellular location is the nucleus. Functionally, acts via the piwi-interacting RNA (piRNA) pathway which mediates the repression of transposable elements during meiosis by forming complexes composed of piRNAs and piwi proteins and governs the methylation and subsequent repression of transposons. Required for transcriptional silencing of transposons targeted by piwi and confers its effects by interacting with nascent RNA transcripts. Likely to be recruited to nascent transcripts cotranscriptionally by piwi and to recruit additional factors involved in transcriptional silencing. In the ovaries, forms a complex with nxf2, piwi and Nxt1 which acts as effectors of cotranscriptional transposon silencing. The interaction with nxf2 stabilizes the nuclear protein complex. This Drosophila melanogaster (Fruit fly) protein is Protein panoramix.